The primary structure comprises 185 residues: Ribosome-recycling factor (185 aa).

It belongs to the RRF family.

The protein resides in the cytoplasm. In terms of biological role, responsible for the release of ribosomes from messenger RNA at the termination of protein biosynthesis. May increase the efficiency of translation by recycling ribosomes from one round of translation to another. The sequence is that of Ribosome-recycling factor from Shewanella denitrificans (strain OS217 / ATCC BAA-1090 / DSM 15013).